A 388-amino-acid chain; its full sequence is Succinate--CoA ligase [ADP-forming] subunit beta (388 aa).

Residues 9–244 (KQLFAEYGLP…PSQEDSREAE (236 aa)) form the ATP-grasp domain. Residues K46, 53–55 (GRG), E99, T102, and E107 each bind ATP. N199 and D213 together coordinate Mg(2+). Substrate-binding positions include N264 and 321-323 (GIV).

The protein belongs to the succinate/malate CoA ligase beta subunit family. Heterotetramer of two alpha and two beta subunits. Requires Mg(2+) as cofactor.

It catalyses the reaction succinate + ATP + CoA = succinyl-CoA + ADP + phosphate. It carries out the reaction GTP + succinate + CoA = succinyl-CoA + GDP + phosphate. It functions in the pathway carbohydrate metabolism; tricarboxylic acid cycle; succinate from succinyl-CoA (ligase route): step 1/1. Succinyl-CoA synthetase functions in the citric acid cycle (TCA), coupling the hydrolysis of succinyl-CoA to the synthesis of either ATP or GTP and thus represents the only step of substrate-level phosphorylation in the TCA. The beta subunit provides nucleotide specificity of the enzyme and binds the substrate succinate, while the binding sites for coenzyme A and phosphate are found in the alpha subunit. The protein is Succinate--CoA ligase [ADP-forming] subunit beta of Marinobacter nauticus (strain ATCC 700491 / DSM 11845 / VT8) (Marinobacter aquaeolei).